Here is a 462-residue protein sequence, read N- to C-terminus: Argininosuccinate lyase (462 aa).

The protein belongs to the lyase 1 family. Argininosuccinate lyase subfamily.

It is found in the cytoplasm. The enzyme catalyses 2-(N(omega)-L-arginino)succinate = fumarate + L-arginine. It participates in amino-acid biosynthesis; L-arginine biosynthesis; L-arginine from L-ornithine and carbamoyl phosphate: step 3/3. This Nitratiruptor sp. (strain SB155-2) protein is Argininosuccinate lyase.